The sequence spans 89 residues: Small ribosomal subunit protein uS15 (89 aa).

The protein belongs to the universal ribosomal protein uS15 family. In terms of assembly, part of the 30S ribosomal subunit. Forms a bridge to the 50S subunit in the 70S ribosome, contacting the 23S rRNA.

Functionally, one of the primary rRNA binding proteins, it binds directly to 16S rRNA where it helps nucleate assembly of the platform of the 30S subunit by binding and bridging several RNA helices of the 16S rRNA. Forms an intersubunit bridge (bridge B4) with the 23S rRNA of the 50S subunit in the ribosome. The polypeptide is Small ribosomal subunit protein uS15 (Bartonella quintana (strain Toulouse) (Rochalimaea quintana)).